We begin with the raw amino-acid sequence, 795 residues long: Outer membrane protein assembly factor BamA (795 aa).

The signal sequence occupies residues Met-1–Ala-19. POTRA domains are found at residues Phe-22–Lys-89, Ser-90–Asp-170, Ala-173–Gly-259, Tyr-262–Gly-341, and Leu-344–Arg-418.

Belongs to the BamA family. In terms of assembly, part of the Bam complex.

Its subcellular location is the cell outer membrane. Functionally, part of the outer membrane protein assembly complex, which is involved in assembly and insertion of beta-barrel proteins into the outer membrane. This chain is Outer membrane protein assembly factor BamA, found in Haemophilus influenzae (strain ATCC 51907 / DSM 11121 / KW20 / Rd).